The chain runs to 281 residues: Ethylene-inducing xylanase 1 (281 aa).

The first 19 residues, 1 to 19, serve as a signal peptide directing secretion; the sequence is MVSYKAFLITLAAVTRVLT. Asparagine 23 is a glycosylation site (N-linked (GlcNAc...) asparagine). A GH11 domain is found at 32–220; the sequence is SGTPSSTGTS…SSGSSDITVG (189 aa). Glutamate 116 (nucleophile) is an active-site residue. Glutamate 207 functions as the Proton donor in the catalytic mechanism. In terms of domain architecture, CBM1 spans 246–281; it reads TCGALYSQCGGTGFTGSQCCASGTCKYANSYYSQCL.

Belongs to the glycosyl hydrolase 11 (cellulase G) family.

It carries out the reaction Endohydrolysis of (1-&gt;4)-beta-D-xylosidic linkages in xylans.. It functions in the pathway glycan degradation; xylan degradation. Endo-1,4-beta-xylanase involved in the hydrolysis of xylan, a major structural heterogeneous polysaccharide found in plant biomass representing the second most abundant polysaccharide in the biosphere, after cellulose. May act as an elicitor of plant defense responses in certain plants but does not exhibit any cell death when transiently expressed in N.benthamiana. The sequence is that of Ethylene-inducing xylanase 1 from Botryotinia fuckeliana (strain B05.10) (Noble rot fungus).